Here is a 412-residue protein sequence, read N- to C-terminus: UV DNA damage endonuclease (412 aa).

It belongs to the uve1/UvsE family.

Functionally, component in a DNA repair pathway. Removal of UV LIGHT damaged nucleotides. Recognizes pyrimidine dimers and cleave a phosphodiester bond immediately 5' to the lesion. The polypeptide is UV DNA damage endonuclease (Clostridium perfringens (strain 13 / Type A)).